Reading from the N-terminus, the 404-residue chain is 2,3-bisphosphoglycerate-independent phosphoglycerate mutase (404 aa).

The interval Leu155–Arg183 is disordered. The span at Ser162–Arg183 shows a compositional bias: basic and acidic residues.

Belongs to the BPG-independent phosphoglycerate mutase family. A-PGAM subfamily.

It carries out the reaction (2R)-2-phosphoglycerate = (2R)-3-phosphoglycerate. It participates in carbohydrate degradation; glycolysis; pyruvate from D-glyceraldehyde 3-phosphate: step 3/5. Catalyzes the interconversion of 2-phosphoglycerate and 3-phosphoglycerate. This chain is 2,3-bisphosphoglycerate-independent phosphoglycerate mutase, found in Thermoplasma acidophilum (strain ATCC 25905 / DSM 1728 / JCM 9062 / NBRC 15155 / AMRC-C165).